Here is a 65-residue protein sequence, read N- to C-terminus: Alpha-toxin Bot1 (65 aa).

The LCN-type CS-alpha/beta domain occupies 2–64 (RDAYIAQPEN…VPIRIPGKCH (63 aa)). 4 disulfide bridges follow: Cys-12/Cys-63, Cys-16/Cys-36, Cys-22/Cys-46, and Cys-26/Cys-48. Phe-65 is modified (phenylalanine amide).

This sequence belongs to the long (4 C-C) scorpion toxin superfamily. Sodium channel inhibitor family. Alpha subfamily. In terms of tissue distribution, expressed by the venom gland.

It localises to the secreted. Functionally, alpha toxins bind voltage-independently at site-3 of sodium channels (Nav) and inhibit the inactivation of the activated channels, thereby blocking neuronal transmission. The protein is Alpha-toxin Bot1 of Buthus occitanus tunetanus (Common European scorpion).